Here is a 249-residue protein sequence, read N- to C-terminus: Small ribosomal subunit protein uS5 (249 aa).

Residues 1 to 14 (MSAEAPKRQFGDRR) show a composition bias toward basic and acidic residues. Residues 1 to 29 (MSAEAPKRQFGDRRRGGRRGGRRDGEEKG) are disordered. In terms of domain architecture, S5 DRBM spans 71 to 134 (LKDDVMKIRS…VIAKLSIIPI (64 aa)).

This sequence belongs to the universal ribosomal protein uS5 family. In terms of assembly, component of the small ribosomal subunit. Mature ribosomes consist of a small (40S) and a large (60S) subunit. The 40S subunit contains about 32 different proteins and 1 molecule of RNA (18S). The 60S subunit contains 45 different proteins and 3 molecules of RNA (25S, 5.8S and 5S).

The protein localises to the cytoplasm. Its function is as follows. Component of the ribosome, a large ribonucleoprotein complex responsible for the synthesis of proteins in the cell. The small ribosomal subunit (SSU) binds messenger RNAs (mRNAs) and translates the encoded message by selecting cognate aminoacyl-transfer RNA (tRNA) molecules. The large subunit (LSU) contains the ribosomal catalytic site termed the peptidyl transferase center (PTC), which catalyzes the formation of peptide bonds, thereby polymerizing the amino acids delivered by tRNAs into a polypeptide chain. The nascent polypeptides leave the ribosome through a tunnel in the LSU and interact with protein factors that function in enzymatic processing, targeting, and the membrane insertion of nascent chains at the exit of the ribosomal tunnel. RPS2 is important for the assembly and function of the 40S ribosomal subunitand is nvolved in nucleolar processing of pre-18S ribosomal RNA and ribosome assembly. This chain is Small ribosomal subunit protein uS5 (RPS21), found in Candida albicans (strain SC5314 / ATCC MYA-2876) (Yeast).